A 185-amino-acid polypeptide reads, in one-letter code: Hypoxanthine/guanine phosphoribosyltransferase (185 aa).

The protein belongs to the purine/pyrimidine phosphoribosyltransferase family. Archaeal HPRT subfamily. Homodimer.

The protein localises to the cytoplasm. The enzyme catalyses IMP + diphosphate = hypoxanthine + 5-phospho-alpha-D-ribose 1-diphosphate. The catalysed reaction is GMP + diphosphate = guanine + 5-phospho-alpha-D-ribose 1-diphosphate. It functions in the pathway purine metabolism; IMP biosynthesis via salvage pathway; IMP from hypoxanthine: step 1/1. In terms of biological role, catalyzes a salvage reaction resulting in the formation of IMP that is energically less costly than de novo synthesis. The protein is Hypoxanthine/guanine phosphoribosyltransferase of Methanococcus maripaludis (strain C7 / ATCC BAA-1331).